The primary structure comprises 425 residues: Dihydroorotase (425 aa).

Histidine 56 and histidine 58 together coordinate Zn(2+). Residues 58 to 60 (HYR) and asparagine 90 contribute to the substrate site. Residues aspartate 148, histidine 175, and histidine 228 each contribute to the Zn(2+) site. A substrate-binding site is contributed by asparagine 274. Aspartate 301 is a Zn(2+) binding site. Aspartate 301 is a catalytic residue. Residues histidine 305 and 319-320 (FG) contribute to the substrate site.

It belongs to the metallo-dependent hydrolases superfamily. DHOase family. Class I DHOase subfamily. Requires Zn(2+) as cofactor.

It catalyses the reaction (S)-dihydroorotate + H2O = N-carbamoyl-L-aspartate + H(+). The protein operates within pyrimidine metabolism; UMP biosynthesis via de novo pathway; (S)-dihydroorotate from bicarbonate: step 3/3. In terms of biological role, catalyzes the reversible cyclization of carbamoyl aspartate to dihydroorotate. The sequence is that of Dihydroorotase from Lactobacillus delbrueckii subsp. bulgaricus (strain ATCC 11842 / DSM 20081 / BCRC 10696 / JCM 1002 / NBRC 13953 / NCIMB 11778 / NCTC 12712 / WDCM 00102 / Lb 14).